Here is a 119-residue protein sequence, read N- to C-terminus: Large ribosomal subunit protein uL18 (119 aa).

The interval 1–26 (MGQNDKAARRQKIKLRSKTRGQGTAA) is disordered. Over residues 9 to 19 (RRQKIKLRSKT) the composition is skewed to basic residues.

It belongs to the universal ribosomal protein uL18 family. In terms of assembly, part of the 50S ribosomal subunit; part of the 5S rRNA/L5/L18/L25 subcomplex. Contacts the 5S and 23S rRNAs.

Functionally, this is one of the proteins that bind and probably mediate the attachment of the 5S RNA into the large ribosomal subunit, where it forms part of the central protuberance. In Prosthecochloris aestuarii (strain DSM 271 / SK 413), this protein is Large ribosomal subunit protein uL18.